Consider the following 998-residue polypeptide: RNA-directed RNA polymerase (998 aa).

A helical transmembrane segment spans residues 17–34 (LPVGIATVSGCGAVVYCI). The interval 35–998 (SKFWGYGAIA…AQPQPSNNRK (964 aa)) is cytoplasmic. Positions 91 to 282 (NGHAVSGAVR…LVYTIPQYVI (192 aa)) are capping. Catalysis depends on aspartate 692, which acts as the For RdRp/TNTase activity. Positions 901 to 998 (AKQTRANPGT…AQPQPSNNRK (98 aa)) are disordered. Polar residues-rich tracts occupy residues 904–913 (TRANPGTSRP) and 947–961 (GKTN…TAGE). A compositionally biased stretch (basic residues) spans 971–984 (KGPRGGKTNTRRTP).

This sequence belongs to the nodaviridae RNA polymerase family. In terms of assembly, homododecamer. Forms 2 stacked rings of 35-nm in diameter, arranged in a crown-like structure at the opening of virus-induced replication vesicles. Interacts with protein B2. Mn(2+) is required as a cofactor.

It is found in the host mitochondrion outer membrane. The enzyme catalyses RNA(n) + a ribonucleoside 5'-triphosphate = RNA(n+1) + diphosphate. Drastically inhibited by phosphonoacetic acid. Only slightly inhibited by gliotoxin. Functionally, RNA-dependent RNA polymerase, which replicates the viral genome composed of 2 RNA segments, RNA1 and RNA2. Does not need an exogenous primer. Also possesses a terminal nucleotidyl transferase (TNTase) activity. The TNTase catalyzes the addition of nucleotide to the 3'-end of plus- and minus-stranded RNAs, probably to repair the 3'-end nucleotide loss. Forms the open necked connection to the cytosol of the virus-induced replication vesicles. Mediates viral RNA1 recruitment. In Heteronychus arator (African black beetle), this protein is RNA-directed RNA polymerase.